A 170-amino-acid chain; its full sequence is MFEQEDEWISKTQMKKQMNGLQDLGMELTKLSNDTLKKIGLDEDLYEAVVTYKKITSNGALKRQAQFIGRLMRDTDPAPIEAFLAKLRGDDAAHNAFLQRVEQARVRLLADDGALTQFMSDFPHADAGKLRTLIRNTKKEQEQNKPPKNFRALFQELKTVMESQGGTGEA.

It belongs to the DarP family.

It localises to the cytoplasm. In terms of biological role, member of a network of 50S ribosomal subunit biogenesis factors which assembles along the 30S-50S interface, preventing incorrect 23S rRNA structures from forming. Promotes peptidyl transferase center (PTC) maturation. The sequence is that of Dual-action ribosomal maturation protein DarP from Neisseria meningitidis serogroup A / serotype 4A (strain DSM 15465 / Z2491).